The primary structure comprises 250 residues: Probable phosphatase VPA1527 (250 aa).

9 residues coordinate Zn(2+): histidine 8, histidine 10, histidine 16, histidine 41, glutamate 74, histidine 102, histidine 132, aspartate 194, and histidine 196.

It belongs to the PHP family. Zn(2+) serves as cofactor.

This is Probable phosphatase VPA1527 from Vibrio parahaemolyticus serotype O3:K6 (strain RIMD 2210633).